A 348-amino-acid polypeptide reads, in one-letter code: Phenylalanine--tRNA ligase alpha subunit (348 aa).

Residue Glu-259 coordinates Mg(2+).

Belongs to the class-II aminoacyl-tRNA synthetase family. Phe-tRNA synthetase alpha subunit type 1 subfamily. As to quaternary structure, tetramer of two alpha and two beta subunits. Mg(2+) is required as a cofactor.

It is found in the cytoplasm. The enzyme catalyses tRNA(Phe) + L-phenylalanine + ATP = L-phenylalanyl-tRNA(Phe) + AMP + diphosphate + H(+). The sequence is that of Phenylalanine--tRNA ligase alpha subunit from Ligilactobacillus salivarius (strain UCC118) (Lactobacillus salivarius).